A 632-amino-acid chain; its full sequence is Probable electron transfer flavoprotein-ubiquinone oxidoreductase, mitochondrial (632 aa).

Position 93–107 (93–107) interacts with FAD; that stretch reads VCIVGAGPAGLSAAI. [4Fe-4S] cluster is bound by residues C575, C601, C604, and C607. Residues 592 to 621 form the 4Fe-4S ferredoxin-type domain; that stretch reads KRFVINSQNCVHCKTCDIKDPLQGIQWKTP.

Belongs to the ETF-QO/FixC family. The cofactor is [4Fe-4S] cluster. FAD is required as a cofactor.

Its subcellular location is the mitochondrion inner membrane. The catalysed reaction is a ubiquinone + reduced [electron-transfer flavoprotein] = a ubiquinol + oxidized [electron-transfer flavoprotein] + H(+). Its function is as follows. Accepts electrons from ETF and reduces ubiquinone. The polypeptide is Probable electron transfer flavoprotein-ubiquinone oxidoreductase, mitochondrial (Schizosaccharomyces pombe (strain 972 / ATCC 24843) (Fission yeast)).